We begin with the raw amino-acid sequence, 487 residues long: Protein nucleotidyltransferase YdiU (487 aa).

Residues G85, G87, R88, K108, D120, G121, R171, and R178 each coordinate ATP. The Proton acceptor role is filled by D247. Residues N248 and D257 each coordinate Mg(2+). Position 257 (D257) interacts with ATP.

Belongs to the SELO family. Mg(2+) serves as cofactor. The cofactor is Mn(2+).

The catalysed reaction is L-seryl-[protein] + ATP = 3-O-(5'-adenylyl)-L-seryl-[protein] + diphosphate. It catalyses the reaction L-threonyl-[protein] + ATP = 3-O-(5'-adenylyl)-L-threonyl-[protein] + diphosphate. The enzyme catalyses L-tyrosyl-[protein] + ATP = O-(5'-adenylyl)-L-tyrosyl-[protein] + diphosphate. It carries out the reaction L-histidyl-[protein] + UTP = N(tele)-(5'-uridylyl)-L-histidyl-[protein] + diphosphate. The catalysed reaction is L-seryl-[protein] + UTP = O-(5'-uridylyl)-L-seryl-[protein] + diphosphate. It catalyses the reaction L-tyrosyl-[protein] + UTP = O-(5'-uridylyl)-L-tyrosyl-[protein] + diphosphate. In terms of biological role, nucleotidyltransferase involved in the post-translational modification of proteins. It can catalyze the addition of adenosine monophosphate (AMP) or uridine monophosphate (UMP) to a protein, resulting in modifications known as AMPylation and UMPylation. The polypeptide is Protein nucleotidyltransferase YdiU (Agrobacterium fabrum (strain C58 / ATCC 33970) (Agrobacterium tumefaciens (strain C58))).